We begin with the raw amino-acid sequence, 134 residues long: MILGIGTDLANIERIARTLDRFGDRFRNRVFTDIEQVKAERRKDVAGTYAKRWAAKEACSKALGTGLAMGIAWKDMSVTNLKSGQPVMHVTGWAQERLAAMTPPGHEAVIHVTLTDDHPWAQAFVVIEALPLKS.

Positions 8 and 57 each coordinate Mg(2+).

Belongs to the P-Pant transferase superfamily. AcpS family. Mg(2+) is required as a cofactor.

The protein resides in the cytoplasm. The enzyme catalyses apo-[ACP] + CoA = holo-[ACP] + adenosine 3',5'-bisphosphate + H(+). In terms of biological role, transfers the 4'-phosphopantetheine moiety from coenzyme A to a Ser of acyl-carrier-protein. The chain is Holo-[acyl-carrier-protein] synthase from Roseobacter denitrificans (strain ATCC 33942 / OCh 114) (Erythrobacter sp. (strain OCh 114)).